A 44-amino-acid polypeptide reads, in one-letter code: MTSNNSNQPITYPIFTVRWLSVHALGVPSVFFLGAIAAMQFIQR.

The helical transmembrane segment at 19–35 (WLSVHALGVPSVFFLGA) threads the bilayer. Histidine 23 contributes to the heme binding site.

The protein belongs to the PsbE/PsbF family. In terms of assembly, heterodimer of an alpha subunit and a beta subunit. PSII is composed of 1 copy each of membrane proteins PsbA, PsbB, PsbC, PsbD, PsbE, PsbF, PsbH, PsbI, PsbJ, PsbK, PsbL, PsbM, PsbT, PsbX, PsbY, PsbZ, Psb30/Ycf12, peripheral proteins PsbO, CyanoQ (PsbQ), PsbU, PsbV and a large number of cofactors. It forms dimeric complexes. Heme b serves as cofactor.

The protein resides in the cellular thylakoid membrane. Functionally, this b-type cytochrome is tightly associated with the reaction center of photosystem II (PSII). PSII is a light-driven water:plastoquinone oxidoreductase that uses light energy to abstract electrons from H(2)O, generating O(2) and a proton gradient subsequently used for ATP formation. It consists of a core antenna complex that captures photons, and an electron transfer chain that converts photonic excitation into a charge separation. The polypeptide is Cytochrome b559 subunit beta (Synechococcus elongatus (strain ATCC 33912 / PCC 7942 / FACHB-805) (Anacystis nidulans R2)).